We begin with the raw amino-acid sequence, 285 residues long: Bifunctional protein FolD (285 aa).

NADP(+) is bound by residues 165 to 167 and Ser-190; that span reads GRS.

This sequence belongs to the tetrahydrofolate dehydrogenase/cyclohydrolase family. As to quaternary structure, homodimer.

The catalysed reaction is (6R)-5,10-methylene-5,6,7,8-tetrahydrofolate + NADP(+) = (6R)-5,10-methenyltetrahydrofolate + NADPH. It carries out the reaction (6R)-5,10-methenyltetrahydrofolate + H2O = (6R)-10-formyltetrahydrofolate + H(+). The protein operates within one-carbon metabolism; tetrahydrofolate interconversion. Functionally, catalyzes the oxidation of 5,10-methylenetetrahydrofolate to 5,10-methenyltetrahydrofolate and then the hydrolysis of 5,10-methenyltetrahydrofolate to 10-formyltetrahydrofolate. This chain is Bifunctional protein FolD, found in Burkholderia thailandensis (strain ATCC 700388 / DSM 13276 / CCUG 48851 / CIP 106301 / E264).